A 131-amino-acid polypeptide reads, in one-letter code: Large ribosomal subunit protein bL17 (131 aa).

It belongs to the bacterial ribosomal protein bL17 family. In terms of assembly, part of the 50S ribosomal subunit. Contacts protein L32.

The sequence is that of Large ribosomal subunit protein bL17 from Nitrosospira multiformis (strain ATCC 25196 / NCIMB 11849 / C 71).